Consider the following 298-residue polypeptide: O-glycoside alpha-1,2-mannosyltransferase homolog 6 (298 aa).

Residue E220 is the Nucleophile of the active site.

It belongs to the glycosyltransferase 15 family.

It localises to the cytoplasm. The protein resides in the nucleus. Its function is as follows. Probable mannosyltransferase involved in O-glycosylation of cell wall and secreted proteins. The sequence is that of O-glycoside alpha-1,2-mannosyltransferase homolog 6 (omh6) from Schizosaccharomyces pombe (strain 972 / ATCC 24843) (Fission yeast).